A 241-amino-acid chain; its full sequence is Interleukin-6 (241 aa).

The signal sequence occupies residues 1-26 (MNSFTSALRPGPLGCSLALLLVVATA). Residues 32-51 (PVREDSNTKASPDKTLTPPG) are disordered. Disulfide bonds link Cys-72–Cys-78 and Cys-101–Cys-111. N-linked (GlcNAc...) asparagine glycosylation is present at Asn-108.

The protein belongs to the IL-6 superfamily. In terms of assembly, component of a hexamer of two molecules each of IL6, IL6R and IL6ST; first binds to IL6R to associate with the signaling subunit IL6ST. Interacts with IL6R (via the N-terminal ectodomain); this interaction may be affected by IL6R-binding with SORL1, hence decreasing IL6 cis signaling. Interacts with SORL1 (via the N-terminal ectodomain); this interaction leads to IL6 internalization and lysosomal degradation. May form a trimeric complex with the soluble SORL1 ectodomain and soluble IL6R receptor; this interaction might stabilize circulating IL6, hence promoting IL6 trans signaling.

Its subcellular location is the secreted. Functionally, cytokine with a wide variety of biological functions in immunity, tissue regeneration, and metabolism. Binds to IL6R, then the complex associates to the signaling subunit IL6ST/gp130 to trigger the intracellular IL6-signaling pathway. The interaction with the membrane-bound IL6R and IL6ST stimulates 'classic signaling', whereas the binding of IL6 and soluble IL6R to IL6ST stimulates 'trans-signaling'. Alternatively, 'cluster signaling' occurs when membrane-bound IL6:IL6R complexes on transmitter cells activate IL6ST receptors on neighboring receiver cells. In terms of biological role, IL6 is a potent inducer of the acute phase response. Rapid production of IL6 contributes to host defense during infection and tissue injury, but excessive IL6 synthesis is involved in disease pathology. In the innate immune response, is synthesized by myeloid cells, such as macrophages and dendritic cells, upon recognition of pathogens through toll-like receptors (TLRs) at the site of infection or tissue injury. In the adaptive immune response, is required for the differentiation of B cells into immunoglobulin-secreting cells. Plays a major role in the differentiation of CD4(+) T cell subsets. Essential factor for the development of T follicular helper (Tfh) cells that are required for the induction of germinal-center formation. Required to drive naive CD4(+) T cells to the Th17 lineage. Also required for proliferation of myeloma cells and the survival of plasmablast cells. Acts as an essential factor in bone homeostasis and on vessels directly or indirectly by induction of VEGF, resulting in increased angiogenesis activity and vascular permeability. Induces, through 'trans-signaling' and synergistically with IL1B and TNF, the production of VEGF. Involved in metabolic controls, is discharged into the bloodstream after muscle contraction increasing lipolysis and improving insulin resistance. 'Trans-signaling' in central nervous system also regulates energy and glucose homeostasis. Mediates, through GLP-1, crosstalk between insulin-sensitive tissues, intestinal L cells and pancreatic islets to adapt to changes in insulin demand. Also acts as a myokine. Plays a protective role during liver injury, being required for maintenance of tissue regeneration. Also has a pivotal role in iron metabolism by regulating HAMP/hepcidin expression upon inflammation or bacterial infection. Through activation of IL6ST-YAP-NOTCH pathway, induces inflammation-induced epithelial regeneration. The protein is Interleukin-6 (IL6) of Oryctolagus cuniculus (Rabbit).